We begin with the raw amino-acid sequence, 406 residues long: Outer membrane protein assembly factor BamB (406 aa).

The N-terminal stretch at 1–23 (MMKQVDMYKRVALIALMGMSLAG) is a signal peptide. Cys-24 carries the N-palmitoyl cysteine lipid modification. Cys-24 carries S-diacylglycerol cysteine lipidation.

The protein belongs to the BamB family. As to quaternary structure, part of the Bam complex.

It localises to the cell outer membrane. In terms of biological role, part of the outer membrane protein assembly complex, which is involved in assembly and insertion of beta-barrel proteins into the outer membrane. The chain is Outer membrane protein assembly factor BamB from Xanthomonas campestris pv. campestris (strain ATCC 33913 / DSM 3586 / NCPPB 528 / LMG 568 / P 25).